The sequence spans 204 residues: Large ribosomal subunit protein uL3 (204 aa).

It belongs to the universal ribosomal protein uL3 family. As to quaternary structure, part of the 50S ribosomal subunit. Forms a cluster with proteins L14 and L19.

One of the primary rRNA binding proteins, it binds directly near the 3'-end of the 23S rRNA, where it nucleates assembly of the 50S subunit. The protein is Large ribosomal subunit protein uL3 of Azobacteroides pseudotrichonymphae genomovar. CFP2.